The primary structure comprises 313 residues: Protein phosphatase PTC7 homolog fig (313 aa).

Residues 47–307 (KEPLTDLQLR…DDITVILASL (261 aa)) form the PPM-type phosphatase domain. Mn(2+) is bound by residues aspartate 83, glycine 84, and aspartate 229.

Belongs to the PP2C family. The cofactor is Mg(2+). Mn(2+) is required as a cofactor.

It catalyses the reaction O-phospho-L-seryl-[protein] + H2O = L-seryl-[protein] + phosphate. The catalysed reaction is O-phospho-L-threonyl-[protein] + H2O = L-threonyl-[protein] + phosphate. This Drosophila virilis (Fruit fly) protein is Protein phosphatase PTC7 homolog fig.